The chain runs to 3375 residues: Basement membrane proteoglycan (3375 aa).

Residues 1 to 22 (MKRSSTVLAALLALLLVATNDA) form the signal peptide. Residues 45 to 130 (VQITVFPSEK…NTVEARATLS (86 aa)) enclose the Ig-like C2-type 1 domain. Disulfide bonds link Cys-66/Cys-114, Cys-149/Cys-161, Cys-156/Cys-174, Cys-168/Cys-183, Cys-190/Cys-202, Cys-197/Cys-215, Cys-209/Cys-224, Cys-233/Cys-246, Cys-240/Cys-259, Cys-253/Cys-268, and Cys-293/Cys-344. LDL-receptor class A domains follow at residues 148–184 (QCMA…ANCP), 189–225 (TCEP…LNCN), and 232–269 (DCKP…VGCV). The Ig-like C2-type 2 domain occupies 271–355 (PTVVDPPQTN…AINVKGRVLA (85 aa)). A disordered region spans residues 364 to 385 (VDDPRPQPPQPPTAPPQRASCD). Positions 369 to 378 (PQPPQPPTAP) are enriched in pro residues. Disulfide bonds link Cys-384-Cys-400, Cys-402-Cys-411, and Cys-414-Cys-429. Positions 384–431 (CDTRGAVTPYPNNYGTCECKSQVTGPNCDQCKPGAFHLSEKSPEGCLK) constitute a Laminin EGF-like 1; truncated domain. The Laminin EGF-like 2; first part domain maps to 432-441 (CFCFGVSNDC). The region spanning 450–633 (KDRLMFAGDA…PDGLALEVEQ (184 aa)) is the Laminin IV type A 1 domain. Cystine bridges form between Cys-634–Cys-648, Cys-636–Cys-689, Cys-691–Cys-700, and Cys-703–Cys-718. The Laminin EGF-like 2; second part domain maps to 634 to 666 (CVCPPGYLGTSCEDCAPGYERSGYGPYLGTCVP). The Laminin EGF-like 3; truncated domain occupies 674 to 720 (CGPGAVAPTAPAQGQCQCKASVIGPNCDRCAPNSFGLAPTNPQGCIP). One can recognise a Laminin EGF-like 4; first part domain in the interval 721-730 (CFCSGVTQQC). One can recognise a Laminin IV type A 2 domain in the interval 740–921 (VSIDYARGDR…QGLTAAEVEQ (182 aa)). The Laminin EGF-like 4; second part domain occupies 922–954 (CICPPGYVGTSCEDCAPGYSRTGGGLYLGLCEK). Cystine bridges form between Cys-955/Cys-964, Cys-957/Cys-971, Cys-974/Cys-983, Cys-986/Cys-1002, Cys-1011/Cys-1021, Cys-1013/Cys-1027, Cys-1030/Cys-1039, Cys-1042/Cys-1058, Cys-1061/Cys-1069, Cys-1063/Cys-1079, Cys-1082/Cys-1091, Cys-1094/Cys-1109, Cys-1152/Cys-1200, Cys-1247/Cys-1294, and Cys-1338/Cys-1384. Laminin EGF-like domains follow at residues 955–1004 (CECN…DCQP), 1011–1060 (CHCN…DCTP), and 1061–1111 (CPCP…VCEP). 15 Ig-like C2-type domains span residues 1126–1222 (PHEV…KRIS), 1226–1311 (PQPV…AVLE), 1319–1401 (PKVD…EPVQ), 1410–1499 (PQRG…ARLN), 1503–1585 (PQAI…RPVE), 1588–1680 (PARV…TPAT), 1690–1785 (PQVE…STLN), 1793–1878 (PRPV…VRLE), 1886–1970 (PTAV…GNVN), 1973–2069 (PSLT…IYIE), 2073–2163 (PSRI…AVHV), 2173–2260 (PKVE…TAVS), 2263–2343 (QQDK…GFVT), 2349–2435 (PDTI…RTVL), and 2446–2530 (TFTV…VDLQ). Over residues 1388–1400 (DPSDNTPLQSEPV) the composition is skewed to polar residues. Disordered stretches follow at residues 1388-1426 (DPSD…QTVN) and 1478-1497 (EYEC…PPAR). An N-linked (GlcNAc...) asparagine glycan is attached at Asn-1422. 4 cysteine pairs are disulfide-bonded: Cys-1435–Cys-1481, Cys-1527–Cys-1573, Cys-1618–Cys-1663, and Cys-1719–Cys-1767. Over residues 1481–1497 (CTSTEPDGSTQLSPPAR) the composition is skewed to polar residues. The tract at residues 1773-1792 (NSPPVKTNPSTLNVTPEGTP) is disordered. Residues 1776–1788 (PVKTNPSTLNVTP) are compositionally biased toward polar residues. 15 disulfide bridges follow: Cys-1814–Cys-1861, Cys-1907–Cys-1954, Cys-1998–Cys-2053, Cys-2099–Cys-2147, Cys-2195–Cys-2242, Cys-2284–Cys-2329, Cys-2374–Cys-2420, Cys-2467–Cys-2514, Cys-2713–Cys-2725, Cys-2719–Cys-2736, Cys-2738–Cys-2747, Cys-2754–Cys-2764, Cys-2759–Cys-2773, Cys-2775–Cys-2784, and Cys-2935–Cys-2960. The disordered stretch occupies residues 1880–1918 (TEDQEPPTAVVEPRTWNGKPGERHQFRCITTGSPTPKIT). Positions 1907–1918 (CITTGSPTPKIT) are enriched in polar residues. Asn-2476 is a glycosylation site (N-linked (GlcNAc...) asparagine). In terms of domain architecture, Laminin G-like 1 spans 2532–2713 (DDFIPVIDGE…PSSVVKYDAC (182 aa)). The Laminin G-like 2 domain maps to 2793 to 2960 (PLGFTSDTSF…LSSSGDISSC (168 aa)). N-linked (GlcNAc...) asparagine glycosylation is present at Asn-2950. The span at 2952 to 2963 (SSSGDISSCEES) shows a compositional bias: low complexity. A disordered region spans residues 2952–3124 (SSSGDISSCE…GTLPPDSSSE (173 aa)). Composition is skewed to acidic residues over residues 2979–2990 (EEPEAVIEEPTT) and 2999–3010 (PITEEPTEEPTT). The segment covering 3011 to 3033 (TEEPTTTEEPTTTTEEPTTTTTE) has biased composition (low complexity). Basic and acidic residues predominate over residues 3034–3044 (EPYHIYETSRD). A compositionally biased stretch (low complexity) spans 3049-3079 (IIIPVETTTTSTTTTSTTEEPEAEPALVLPT). The segment covering 3081-3094 (PVEENDVSDEEEEI) has biased composition (acidic residues). Disulfide bonds link Cys-3141–Cys-3152, Cys-3146–Cys-3162, Cys-3164–Cys-3173, and Cys-3333–Cys-3359. N-linked (GlcNAc...) asparagine glycosylation is found at Asn-3143 and Asn-3156. Residues 3180 to 3359 (EHAARFDGDA…AIDGKNVKPC (180 aa)) form the Laminin G-like 3 domain.

In terms of assembly, component of an integrin containing attachment complex, composed of at least pat-2, pat-3, pat-4, pat-6, unc-52, unc-97 and unc-112. In terms of tissue distribution, detected on embryonic and adult body wall muscle cells (at protein level). Found in the basement membrane of all contractile tissues (at protein level). Expressed in gonadal sheath cells and spermatheca.

Its subcellular location is the secreted. It localises to the extracellular space. The protein localises to the extracellular matrix. The protein resides in the basement membrane. It is found in the cytoplasm. Its subcellular location is the myofibril. It localises to the sarcomere. The protein localises to the m line. Component of an integrin containing attachment complex, which is required for muscle development and maintenance. Probable structural role in myofilament assembly and/or attachment of the myofilament lattice to the cell membrane. May be an extracellular anchor for integrin receptors in body wall muscles and myoepithelial sheath cells. During the formation of neuromuscular junctions at the larval stage, negatively regulates membrane protrusion from body wall muscles, probably downstream of the integrin complex formed by pat-2 and pat-3. Involved in ovulation. Required for normal lifespan. This Caenorhabditis elegans protein is Basement membrane proteoglycan.